The following is an 89-amino-acid chain: Small ribosomal subunit protein uS15 (89 aa).

The protein belongs to the universal ribosomal protein uS15 family. Part of the 30S ribosomal subunit. Forms a bridge to the 50S subunit in the 70S ribosome, contacting the 23S rRNA.

In terms of biological role, one of the primary rRNA binding proteins, it binds directly to 16S rRNA where it helps nucleate assembly of the platform of the 30S subunit by binding and bridging several RNA helices of the 16S rRNA. Its function is as follows. Forms an intersubunit bridge (bridge B4) with the 23S rRNA of the 50S subunit in the ribosome. The chain is Small ribosomal subunit protein uS15 from Methylorubrum extorquens (strain CM4 / NCIMB 13688) (Methylobacterium extorquens).